A 505-amino-acid chain; its full sequence is Deoxyguanosinetriphosphate triphosphohydrolase (505 aa).

The 208-residue stretch at 66 to 273 (RLTHSMEVQQ…MEAADDISYC (208 aa)) folds into the HD domain.

This sequence belongs to the dGTPase family. Type 1 subfamily. In terms of assembly, homotetramer. Requires Mg(2+) as cofactor.

It carries out the reaction dGTP + H2O = 2'-deoxyguanosine + triphosphate + H(+). Its activity is regulated as follows. Inhibited by the action of reducing agents such as dithiothreitol and 2-mercaptoethanol. Its function is as follows. dGTPase preferentially hydrolyzes dGTP over the other canonical NTPs. The chain is Deoxyguanosinetriphosphate triphosphohydrolase from Shigella boydii.